A 152-amino-acid polypeptide reads, in one-letter code: Deoxyuridine 5'-triphosphate nucleotidohydrolase (152 aa).

Residues 71–73 (RSG), Asn84, 88–90 (LID), and Met98 each bind substrate.

Belongs to the dUTPase family. Mg(2+) is required as a cofactor.

The enzyme catalyses dUTP + H2O = dUMP + diphosphate + H(+). It participates in pyrimidine metabolism; dUMP biosynthesis; dUMP from dCTP (dUTP route): step 2/2. Its function is as follows. This enzyme is involved in nucleotide metabolism: it produces dUMP, the immediate precursor of thymidine nucleotides and it decreases the intracellular concentration of dUTP so that uracil cannot be incorporated into DNA. This Shewanella sp. (strain MR-7) protein is Deoxyuridine 5'-triphosphate nucleotidohydrolase.